We begin with the raw amino-acid sequence, 357 residues long: Uroporphyrinogen decarboxylase (357 aa).

Substrate-binding positions include 27-31, Asp77, Tyr154, Ser209, and His330; that span reads RQAGR.

Belongs to the uroporphyrinogen decarboxylase family. As to quaternary structure, homodimer.

The protein resides in the cytoplasm. It catalyses the reaction uroporphyrinogen III + 4 H(+) = coproporphyrinogen III + 4 CO2. It functions in the pathway porphyrin-containing compound metabolism; protoporphyrin-IX biosynthesis; coproporphyrinogen-III from 5-aminolevulinate: step 4/4. Functionally, catalyzes the decarboxylation of four acetate groups of uroporphyrinogen-III to yield coproporphyrinogen-III. The protein is Uroporphyrinogen decarboxylase of Acinetobacter baumannii (strain AB0057).